The primary structure comprises 28 residues: Conotoxin Cal6.43b (28 aa).

Cystine bridges form between cysteine 3/cysteine 13, cysteine 7/cysteine 19, and cysteine 12/cysteine 25.

Expressed by the venom duct.

It localises to the secreted. In terms of biological role, probable neurotoxin with unknown target. Possibly targets ion channels. The polypeptide is Conotoxin Cal6.43b (Californiconus californicus (California cone)).